The primary structure comprises 108 residues: Tetrahydromethanopterin S-methyltransferase subunit B (108 aa).

A helical transmembrane segment spans residues Gly79–Val99.

The protein belongs to the MtrB family. The complex is composed of 8 subunits; MtrA, MtrB, MtrC, MtrD, MtrE, MtrF, MtrG and MtrH.

The protein resides in the cell membrane. The catalysed reaction is 5-methyl-5,6,7,8-tetrahydromethanopterin + coenzyme M + 2 Na(+)(in) = 5,6,7,8-tetrahydromethanopterin + methyl-coenzyme M + 2 Na(+)(out). Its pathway is one-carbon metabolism; methanogenesis from CO(2); methyl-coenzyme M from 5,10-methylene-5,6,7,8-tetrahydromethanopterin: step 2/2. In terms of biological role, part of a complex that catalyzes the formation of methyl-coenzyme M and tetrahydromethanopterin from coenzyme M and methyl-tetrahydromethanopterin. This is an energy-conserving, sodium-ion translocating step. The polypeptide is Tetrahydromethanopterin S-methyltransferase subunit B (Methanococcus maripaludis (strain C7 / ATCC BAA-1331)).